A 369-amino-acid polypeptide reads, in one-letter code: MESIHIQTTSKKYDVYVGKHVLSSLTEVVQRMKPAVSNVMIISDESVATLHLQKVKEALQIKQDVFSFVIPSGEKEKSFENFYAVHTAALENKLDRNSLIIALGGGMIGDLAGFVAATFMRGIRFVQVPTTLLAHDSAVGGKVAINHPLGKNMIGAFHQPEAVLYHTPFLDSLPEKEWRSGFAEVIKHALIGDVELYHWLKNNVTTLADLRDDKLVYVLKRAIPVKAKIVAQDETEKGVRAHLNFGHTLGHALEKESGYGNITHGDGVAIGMLFAIFLSEQMYKIDLRYKELKQWFLQYGYPSIPRHLKVDRLVNVMKQDKKANAGTIRMVLMQEYGGVHVVSISDKTVHTSLEAFQKDMVLGEEMNFE.

NAD(+) is bound by residues 72–77 (SGEKEK), 130–131 (TT), lysine 142, and lysine 151. Zn(2+) contacts are provided by glutamate 184, histidine 247, and histidine 264.

Belongs to the sugar phosphate cyclases superfamily. Dehydroquinate synthase family. Co(2+) serves as cofactor. It depends on Zn(2+) as a cofactor. NAD(+) is required as a cofactor.

The protein resides in the cytoplasm. It catalyses the reaction 7-phospho-2-dehydro-3-deoxy-D-arabino-heptonate = 3-dehydroquinate + phosphate. It functions in the pathway metabolic intermediate biosynthesis; chorismate biosynthesis; chorismate from D-erythrose 4-phosphate and phosphoenolpyruvate: step 2/7. Its function is as follows. Catalyzes the conversion of 3-deoxy-D-arabino-heptulosonate 7-phosphate (DAHP) to dehydroquinate (DHQ). The polypeptide is 3-dehydroquinate synthase (Bacillus cytotoxicus (strain DSM 22905 / CIP 110041 / 391-98 / NVH 391-98)).